A 394-amino-acid polypeptide reads, in one-letter code: Imidazolonepropionase (394 aa).

Positions 61 and 63 each coordinate Fe(3+). Zn(2+)-binding residues include H61 and H63. 4-imidazolone-5-propanoate-binding residues include R70, Y133, and H164. Y133 contacts N-formimidoyl-L-glutamate. Residue H225 participates in Fe(3+) binding. H225 contributes to the Zn(2+) binding site. E228 lines the 4-imidazolone-5-propanoate pocket. D299 lines the Fe(3+) pocket. Residue D299 participates in Zn(2+) binding.

It belongs to the metallo-dependent hydrolases superfamily. HutI family. It depends on Zn(2+) as a cofactor. Fe(3+) is required as a cofactor.

The protein resides in the cytoplasm. The enzyme catalyses 4-imidazolone-5-propanoate + H2O = N-formimidoyl-L-glutamate. It participates in amino-acid degradation; L-histidine degradation into L-glutamate; N-formimidoyl-L-glutamate from L-histidine: step 3/3. Catalyzes the hydrolytic cleavage of the carbon-nitrogen bond in imidazolone-5-propanoate to yield N-formimidoyl-L-glutamate. It is the third step in the universal histidine degradation pathway. This is Imidazolonepropionase from Picrophilus torridus (strain ATCC 700027 / DSM 9790 / JCM 10055 / NBRC 100828 / KAW 2/3).